The chain runs to 310 residues: Protein FIP2 (310 aa).

A disordered region spans residues 1 to 58 (MGFAPVTPAAVETYDPDVDHDDESNGLDGFRVRSKRSGKFSGGYSDSPREVGDGYGVR). Over residues 14–25 (YDPDVDHDDESN) the composition is skewed to acidic residues. Phosphoserine is present on residues Ser77 and Ser105. 3 disordered regions span residues 115 to 135 (ATRL…GSGG), 152 to 171 (FKPK…LDYD), and 177 to 221 (DRAE…GSSS). The span at 208-221 (PRNTGASNGYGSSS) shows a compositional bias: polar residues.

Interacts with FRI. Interacts with WAV3.

This is Protein FIP2 from Arabidopsis thaliana (Mouse-ear cress).